We begin with the raw amino-acid sequence, 286 residues long: Inositol polyphosphate multikinase alpha (286 aa).

The segment at 1-22 is disordered; the sequence is MQLKVPEHQVAGHIAKDGKPGP.

The protein belongs to the inositol phosphokinase (IPK) family. Phosphorylated. As to expression, detected in leaves, stems, roots, siliques and flowers. Highly expressed in root tissues, anthers, the stigma, pollen grains and growing pollen tubes.

It localises to the nucleus. The protein localises to the cell membrane. It catalyses the reaction 1D-myo-inositol 1,4,5-trisphosphate + 2 ATP = 1D-myo-inositol 1,3,4,5,6-pentakisphosphate + 2 ADP + 2 H(+). The enzyme catalyses 1D-myo-inositol 1,3,4,6-tetrakisphosphate + ATP = 1D-myo-inositol 1,3,4,5,6-pentakisphosphate + ADP + H(+). Functionally, inositol phosphate kinase with a broad substrate specificity. Phosphorylates inositol 1,4,5-trisphosphate (Ins(1,4,5)P3), inositol 1,4,5,6-tetrakisphosphate (Ins(1,4,5,6)P4), inositol 1,3,4,5-tetrakisphosphate (Ins(1,3,4,5)P4), inositol 1,3,4,6-tetrakisphosphate (Ins(1,3,4,6)P4) and inositol 1,2,3,4,6-pentakisphosphate (Ins(1,2,3,4,6)P5) but not inositol 1,4-bisphosphate (Ins(1,4)P2), inositol 1,3,4-trisphosphate (Ins(1,3,4)P3), inositol 1,2,6-trisphosphate (Ins(1,2,6)P3), inositol 3,4,5,6-tetrakisphosphate (Ins(3,4,5,6)P4), inositol 1,3,4,5,6-pentakisphosphate (Ins(1,3,4,5,6)P5), inositol 1,2,4,5,6-pentakisphosphate (Ins(1,2,4,5,6)P5) or inositol hexakisphosphate (InsP6). Regulates pollen and root development probably through the regulation of InsP3-mediated calcium accumulation. In Arabidopsis thaliana (Mouse-ear cress), this protein is Inositol polyphosphate multikinase alpha (IPK2a).